A 182-amino-acid chain; its full sequence is NADH-quinone oxidoreductase subunit I (182 aa).

4Fe-4S ferredoxin-type domains are found at residues 52–82 (LTRD…LQKA) and 92–121 (EFFR…LTPD). [4Fe-4S] cluster is bound by residues Cys62, Cys65, Cys68, Cys72, Cys101, Cys104, Cys107, and Cys111.

Belongs to the complex I 23 kDa subunit family. NDH-1 is composed of 13 different subunits. Subunits NuoA, H, J, K, L, M, N constitute the membrane sector of the complex. Requires [4Fe-4S] cluster as cofactor.

It localises to the cell inner membrane. The catalysed reaction is a quinone + NADH + 5 H(+)(in) = a quinol + NAD(+) + 4 H(+)(out). In terms of biological role, NDH-1 shuttles electrons from NADH, via FMN and iron-sulfur (Fe-S) centers, to quinones in the respiratory chain. The immediate electron acceptor for the enzyme in this species is believed to be ubiquinone. Couples the redox reaction to proton translocation (for every two electrons transferred, four hydrogen ions are translocated across the cytoplasmic membrane), and thus conserves the redox energy in a proton gradient. In Pseudomonas entomophila (strain L48), this protein is NADH-quinone oxidoreductase subunit I.